A 547-amino-acid polypeptide reads, in one-letter code: Apolipoprotein N-acyltransferase (547 aa).

Helical transmembrane passes span 31-51, 65-85, 89-109, 144-164, 181-201, and 215-235; these read PLPAWSLAPVQVIALAVAAHA, GWLFAMFSFSLGLYWLYVSMH, GLAAPLAAAGVLALSAFLALF, AACWAALEWLRAVVLTGFPWL, LLGVHGMALLAAFAAAALAGL, and LAAGVALLLAGAGWLLGQFSW. Residues 248–511 enclose the CN hydrolase domain; the sequence is VQGNVEQSQK…AGVLPVAVQG (264 aa). Catalysis depends on Glu292, which acts as the Proton acceptor. The active site involves Lys366. The Nucleophile role is filled by Cys416.

Belongs to the CN hydrolase family. Apolipoprotein N-acyltransferase subfamily.

The protein localises to the cell inner membrane. The enzyme catalyses N-terminal S-1,2-diacyl-sn-glyceryl-L-cysteinyl-[lipoprotein] + a glycerophospholipid = N-acyl-S-1,2-diacyl-sn-glyceryl-L-cysteinyl-[lipoprotein] + a 2-acyl-sn-glycero-3-phospholipid + H(+). It functions in the pathway protein modification; lipoprotein biosynthesis (N-acyl transfer). Its function is as follows. Catalyzes the phospholipid dependent N-acylation of the N-terminal cysteine of apolipoprotein, the last step in lipoprotein maturation. The sequence is that of Apolipoprotein N-acyltransferase from Bordetella bronchiseptica (strain ATCC BAA-588 / NCTC 13252 / RB50) (Alcaligenes bronchisepticus).